Reading from the N-terminus, the 183-residue chain is MSIEALRARLPDYAHDLGTNLALLVDDPALDPEARWGCFVASACAVGEPQTLRAIDAAATAAGLTAEANRAARKAAAMMAMTNVYFRAVHLMEGAAYQALPCRLRLNRLAHAGARGVTYDLSCVAVSAINGCGACLDSHEADLRGRGVEPTQIQAALRIAAVVSAVARTLAAEAALHPQNLEI.

Cys-132 (proton donor) is an active-site residue. A disulfide bridge links Cys-132 with Cys-135. Cys-135 (cysteine sulfenic acid (-SOH) intermediate) is an active-site residue.

The protein belongs to the AhpD family.

The catalysed reaction is N(6)-[(R)-dihydrolipoyl]-L-lysyl-[lipoyl-carrier protein] + a hydroperoxide = N(6)-[(R)-lipoyl]-L-lysyl-[lipoyl-carrier protein] + an alcohol + H2O. Antioxidant protein with alkyl hydroperoxidase activity. Required for the reduction of the AhpC active site cysteine residues and for the regeneration of the AhpC enzyme activity. The chain is Alkyl hydroperoxide reductase AhpD from Caulobacter vibrioides (strain ATCC 19089 / CIP 103742 / CB 15) (Caulobacter crescentus).